The chain runs to 1179 residues: uncharacterized protein (1179 aa).

This is an uncharacterized protein from Ictaluridae (bullhead catfishes).